The sequence spans 345 residues: CRISPR-associated endonuclease Cas1 1 (345 aa).

A divalent metal cation contacts are provided by E168, H239, and E254.

The protein belongs to the CRISPR-associated endonuclease Cas1 family. In terms of assembly, forms a heterotetramer with a Cas2 homodimer. Homodimer. It depends on a divalent metal cation as a cofactor.

Its function is as follows. CRISPR (clustered regularly interspaced short palindromic repeat), is an adaptive immune system that provides protection against mobile genetic elements (viruses, transposable elements and conjugative plasmids). CRISPR clusters contain sequences complementary to antecedent mobile elements and target invading nucleic acids. CRISPR clusters are transcribed and processed into CRISPR RNA (crRNA). Involved in the integration of spacer DNA into the CRISPR cassette. Acts as a dsDNA and ssRNA nuclease, binds to linear and circular dsDNA and linear ssRNA and ssDNA. The chain is CRISPR-associated endonuclease Cas1 1 from Archaeoglobus fulgidus (strain ATCC 49558 / DSM 4304 / JCM 9628 / NBRC 100126 / VC-16).